A 475-amino-acid polypeptide reads, in one-letter code: Sulfate adenylyltransferase subunit 1 (475 aa).

In terms of domain architecture, tr-type G spans 25 to 239 (KSLLRFLTCG…EVLETVEIQR (215 aa)). The G1 stretch occupies residues 34–41 (GSVDDGKS). Residue 34–41 (GSVDDGKS) coordinates GTP. Residues 92 to 96 (GITID) are G2. Positions 113-116 (DTPG) are G3. Residues 113–117 (DTPGH) and 168–171 (NKMD) each bind GTP. Positions 168-171 (NKMD) are G4. The interval 206-208 (SAL) is G5.

Belongs to the TRAFAC class translation factor GTPase superfamily. Classic translation factor GTPase family. CysN/NodQ subfamily. As to quaternary structure, heterodimer composed of CysD, the smaller subunit, and CysN.

The enzyme catalyses sulfate + ATP + H(+) = adenosine 5'-phosphosulfate + diphosphate. Its pathway is sulfur metabolism; hydrogen sulfide biosynthesis; sulfite from sulfate: step 1/3. In terms of biological role, with CysD forms the ATP sulfurylase (ATPS) that catalyzes the adenylation of sulfate producing adenosine 5'-phosphosulfate (APS) and diphosphate, the first enzymatic step in sulfur assimilation pathway. APS synthesis involves the formation of a high-energy phosphoric-sulfuric acid anhydride bond driven by GTP hydrolysis by CysN coupled to ATP hydrolysis by CysD. The protein is Sulfate adenylyltransferase subunit 1 of Escherichia coli O157:H7.